The primary structure comprises 353 residues: MRNIRKIKVDNMKVSVYGAGNQNLYINKLNLPEKFGGEPPYGGSRMAIEFAEAGHDVVLAEPNKNIMSDDLWKKVEDAGVKVVSDDVEAAKHGEIHVLFTPFGKATFRIAKTIIEHVPENAVICNTCTVSPVVLYYSLEPILRTKRKDVGISSMHPAAVPGTPQHGHYVIGGKTTDGKELATEEQIKKAVELAKSAGKEAYVVPADVSSVVADMGSLVTAVALSGVLDYYTVGRKIINAPKKMIEQQVIMTLQTMASLVETSGIEGMVKALNPELLIRSASSMKLLDRQKDLDAALEILQNLDETLKAEVEKAEIKPTTLVAAQSLVKEIKTLIGGAAAEGAIKRSARKLFEH.

It belongs to the HMD family.

The polypeptide is H(2)-forming methylenetetrahydromethanopterin dehydrogenase-related protein MJ1338 (Methanocaldococcus jannaschii (strain ATCC 43067 / DSM 2661 / JAL-1 / JCM 10045 / NBRC 100440) (Methanococcus jannaschii)).